The primary structure comprises 45 residues: Large ribosomal subunit protein bL34 (45 aa).

This sequence belongs to the bacterial ribosomal protein bL34 family.

The sequence is that of Large ribosomal subunit protein bL34 from Clavibacter michiganensis subsp. michiganensis (strain NCPPB 382).